The following is a 347-amino-acid chain: Transcription factor EC (347 aa).

A necessary for transcriptional transactivation region spans residues 1–119 (MTLDHQIINP…GLTSASCPSS (119 aa)). The bHLH domain occupies 139–192 (QKKDNHNLIERRRRYNINYRIKELGTLIPKSNDPDMRWNKGTILKASVEYIKWL). The necessary for transcriptional transactivation stretch occupies residues 271–347 (PSPEFCDQAI…SFSSDDGDEL (77 aa)). Positions 319-347 (DPLLSATSPAVSKESSRRSSFSSDDGDEL) are disordered. Low complexity predominate over residues 326–341 (SPAVSKESSRRSSFSS).

It belongs to the MiT/TFE family. As to quaternary structure, homodimer. Forms heterodimers with MITF and TFE3. Interacts with MITF.

Its subcellular location is the nucleus. In terms of biological role, transcriptional regulator that acts as a repressor or an activator. Acts as a transcriptional repressor on minimal promoter containing element F (that includes an E-box sequence). Binds to element F in an E-box sequence-specific manner. Acts as a transcriptional transactivator on the proximal promoter region of the tartrate-resistant acid phosphatase (TRAP) E-box containing promoter. Collaborates with MITF in target gene activation. Acts as a transcriptional repressor on minimal promoter containing mu E3 enhancer sequence. Binds to mu E3 DNA sequence of the immunoglobulin heavy-chain gene enhancer. Binds DNA in a homo- or heterodimeric form. The protein is Transcription factor EC (TFEC) of Pan troglodytes (Chimpanzee).